We begin with the raw amino-acid sequence, 483 residues long: M protein, serotype 6 (483 aa).

An N-terminal signal peptide occupies residues M1–A42. A coiled-coil region spans residues D54 to E171. 8 tandem repeats follow at residues M69–D75, K76–N82, N83–K89, N90–K96, N97–K103, N104–K110, N111–K117, and N118–K124. The segment at M69–K138 is 10 X 7 AA approximate tandem repeats of [KMNR]-L-[TQ]-[TDA]-[ENQ]-N-[NDK]. Positions N74 to Q87 are enriched in polar residues. The tract at residues N74–E157 is disordered. Over residues N88–T113 the composition is skewed to low complexity. 2 stretches are compositionally biased toward basic and acidic residues: residues E122 to T135 and K143 to E157. A 9-1; approximate repeat occupies E125–N131. 5 repeat units span residues R132 to K138, E157 to Q181, E182 to Q206, E207 to Q231, and E232 to Q256. The tract at residues E157 to L269 is 4.5 X 25 AA tandem repeats of E-[NS]-K-E-[TA]-I-G-T-L-K-K-[TI]-L-D-E-T-V-K-D-K-I-A-[KR]-E-Q. Disordered stretches follow at residues E255–K298 and V314–A345. The stretch at K257–L269 is one 5-2; truncated repeat. 2 stretches are compositionally biased toward basic and acidic residues: residues E268–K298 and L328–A345. 2 C repeats span residues A270–L304 and D312–L346. The interval S279–E347 is binding to CD46. A two directly repeated 27 amino acid blocks separated by 15 amino acids region spans residues S279 to E347. The stretch at E280 to S408 forms a coiled coil. The interval E348–Q411 is hydrophilic. D repeat units follow at residues A379–E384, A385–E390, A393–E398, and A400–G405. A disordered region spans residues A400 to T455. The LPXTG sorting signal motif lies at L449–G453. Position 452 is a pentaglycyl murein peptidoglycan amidated threonine (T452). The propeptide at G453–N483 is removed by sortase.

Belongs to the M protein family.

The protein resides in the secreted. The protein localises to the cell wall. In terms of biological role, mediates the attachment of S.pyogenes to skin epithelial cells through the binding of the human membrane cofactor protein CD46. Also binds to the factor H and factor H-like protein 1. These interactions could contribute to the fact that the M6 protein protects the bacterium from the phagocytosis by regulating the complement activation on the bacterial surface. The chain is M protein, serotype 6 (emm6) from Streptococcus pyogenes.